Consider the following 97-residue polypeptide: Aspartyl/glutamyl-tRNA(Asn/Gln) amidotransferase subunit C (97 aa).

This sequence belongs to the GatC family. As to quaternary structure, heterotrimer of A, B and C subunits.

The enzyme catalyses L-glutamyl-tRNA(Gln) + L-glutamine + ATP + H2O = L-glutaminyl-tRNA(Gln) + L-glutamate + ADP + phosphate + H(+). It catalyses the reaction L-aspartyl-tRNA(Asn) + L-glutamine + ATP + H2O = L-asparaginyl-tRNA(Asn) + L-glutamate + ADP + phosphate + 2 H(+). Functionally, allows the formation of correctly charged Asn-tRNA(Asn) or Gln-tRNA(Gln) through the transamidation of misacylated Asp-tRNA(Asn) or Glu-tRNA(Gln) in organisms which lack either or both of asparaginyl-tRNA or glutaminyl-tRNA synthetases. The reaction takes place in the presence of glutamine and ATP through an activated phospho-Asp-tRNA(Asn) or phospho-Glu-tRNA(Gln). The chain is Aspartyl/glutamyl-tRNA(Asn/Gln) amidotransferase subunit C from Synechococcus sp. (strain JA-3-3Ab) (Cyanobacteria bacterium Yellowstone A-Prime).